The sequence spans 20 residues: Large ribosomal subunit protein uL10 (20 aa).

The protein belongs to the universal ribosomal protein uL10 family. In terms of assembly, part of the ribosomal stalk of the 50S ribosomal subunit. The N-terminus interacts with L11 and the large rRNA to form the base of the stalk. The C-terminus forms an elongated spine to which L12 dimers bind in a sequential fashion forming a multimeric L10(L12)X complex.

In terms of biological role, forms part of the ribosomal stalk, playing a central role in the interaction of the ribosome with GTP-bound translation factors. The protein is Large ribosomal subunit protein uL10 (rplJ) of Citrobacter freundii.